Reading from the N-terminus, the 146-residue chain is Large-conductance mechanosensitive channel (146 aa).

3 helical membrane passes run 21 to 41 (VGII…ADLI), 44 to 64 (IIGL…LGDG), and 83 to 103 (GSFI…FLLV).

The protein belongs to the MscL family. Homopentamer.

The protein resides in the cell inner membrane. Functionally, channel that opens in response to stretch forces in the membrane lipid bilayer. May participate in the regulation of osmotic pressure changes within the cell. The chain is Large-conductance mechanosensitive channel from Cereibacter sphaeroides (strain ATCC 17023 / DSM 158 / JCM 6121 / CCUG 31486 / LMG 2827 / NBRC 12203 / NCIMB 8253 / ATH 2.4.1.) (Rhodobacter sphaeroides).